A 310-amino-acid polypeptide reads, in one-letter code: DDRGK domain-containing protein 1 (310 aa).

Residues 1 to 21 traverse the membrane as a helical segment; sequence MAAIIYLAIAAVASILLFVAV. Over 22–310 the chain is Cytoplasmic; that stretch reads KLLSTDTKTE…DSPAEISVNA (289 aa). 2 disordered regions span residues 38–85 and 110–162; these read VGEL…DEYQ and KAEK…LKEE. Over residues 52–70 the composition is skewed to basic residues; the sequence is PRARARRGLRNKTNRSKTQ. Over residues 76–85 the composition is skewed to acidic residues; sequence DYDDYDDEYQ.

Belongs to the DDRGK1 family.

It localises to the endoplasmic reticulum membrane. In terms of biological role, substrate adapter for ufmylation, the covalent attachment of the ubiquitin-like modifier UFM1 to substrate proteins. The polypeptide is DDRGK domain-containing protein 1 (Trichoplax adhaerens (Trichoplax reptans)).